Consider the following 447-residue polypeptide: NADH-quinone oxidoreductase subunit N (447 aa).

13 consecutive transmembrane segments (helical) span residues 4–24 (FAAL…MLAA), 27–47 (LPGL…VALA), 68–88 (LTGL…RPDG), 92–112 (EGPA…GAVH), 113–133 (AASL…LFVL), 146–166 (FLIL…LGHA), 181–201 (ALLT…LALV), 215–235 (PGAA…TALV), 245–265 (VWAL…NLAA), 280–300 (VGHA…APAA), 302–322 (LFYI…AALI), 342–362 (GAAM…AGFF), and 376–395 (AWAL…YYYL).

Belongs to the complex I subunit 2 family. As to quaternary structure, NDH-1 is composed of 14 different subunits. Subunits NuoA, H, J, K, L, M, N constitute the membrane sector of the complex.

It is found in the cell inner membrane. It catalyses the reaction a quinone + NADH + 5 H(+)(in) = a quinol + NAD(+) + 4 H(+)(out). In terms of biological role, NDH-1 shuttles electrons from NADH, via FMN and iron-sulfur (Fe-S) centers, to quinones in the respiratory chain. The immediate electron acceptor for the enzyme in this species is believed to be ubiquinone. Couples the redox reaction to proton translocation (for every two electrons transferred, four hydrogen ions are translocated across the cytoplasmic membrane), and thus conserves the redox energy in a proton gradient. This chain is NADH-quinone oxidoreductase subunit N, found in Cereibacter sphaeroides (strain ATCC 17025 / ATH 2.4.3) (Rhodobacter sphaeroides).